We begin with the raw amino-acid sequence, 172 residues long: Regulator of hemoglobinization and erythroid cell expansion protein (172 aa).

A helical transmembrane segment spans residues 9-29 (WHGLVIAVVSLFLQACFLTAI). A disordered region spans residues 52-106 (VPRPSPGHHHPPAVKEMKETQTERDIPMSDSLYRHDSDTPSDSLDSSCSSPPACQ). The segment covering 64–89 (AVKEMKETQTERDIPMSDSLYRHDSD) has biased composition (basic and acidic residues). Low complexity predominate over residues 91 to 103 (PSDSLDSSCSSPP). Phosphotyrosine occurs at positions 132 and 141.

In terms of assembly, interacts with EPOR; this interaction occurs in a erythropoietin (EPO)-dependent manner. Interacts with JAK2; this interaction occurs in a erythropoietin (EPO)-dependent manner. Interacts (via tyrosine-phosphorylated form) with GRB2. In terms of processing, phosphorylated. Phosphorylation on Tyr-132 and Tyr-141 occurs in a erythropoietin (EPO)-dependent manner. Expressed in the proerythroblasts (at protein level). Expressed strongly in the kidney. Expressed weakly in the pancreas, liver and lung. Expressed strongly in erythroid progenitor cells (EPCs). Expressed weakly in T-cells and neutrophils.

The protein resides in the cell membrane. In terms of biological role, acts as a signaling transduction factor of the EPO-EPOR signaling pathway promoting erythroid cell differentiation. This Homo sapiens (Human) protein is Regulator of hemoglobinization and erythroid cell expansion protein.